Consider the following 302-residue polypeptide: Glycine--tRNA ligase alpha subunit (302 aa).

Belongs to the class-II aminoacyl-tRNA synthetase family. As to quaternary structure, tetramer of two alpha and two beta subunits.

The protein localises to the cytoplasm. It carries out the reaction tRNA(Gly) + glycine + ATP = glycyl-tRNA(Gly) + AMP + diphosphate. The chain is Glycine--tRNA ligase alpha subunit from Wigglesworthia glossinidia brevipalpis.